We begin with the raw amino-acid sequence, 186 residues long: ADP-ribosylation factor-like protein 8B-A (186 aa).

The segment at residues 1 to 19 is an intramembrane region (note=Mediates targeting to membranes); sequence MLALINRLLDWFKSLFWKE. GTP contacts are provided by residues 29–35, 71–75, and 130–133; these read QYSGKTT, DIGGQ, and NKRD.

This sequence belongs to the small GTPase superfamily. Arf family.

The protein resides in the late endosome membrane. The protein localises to the lysosome membrane. It localises to the cytoplasm. It is found in the cytoskeleton. Its subcellular location is the spindle. The protein resides in the early endosome membrane. In terms of biological role, small GTPase which cycles between active GTP-bound and inactive GDP-bound states. In its active state, binds to a variety of effector proteins playing a key role in the regulation of lysosomal positioning which is important for nutrient sensing, natural killer cell-mediated cytotoxicity and antigen presentation. Along with its effectors, orchestrates lysosomal transport and fusion. This Danio rerio (Zebrafish) protein is ADP-ribosylation factor-like protein 8B-A (arl8ba).